We begin with the raw amino-acid sequence, 175 residues long: Ribosome maturation factor RimM (175 aa).

A PRC barrel domain is found at 98–175 (EGEYYWYQLE…EMRVDWDADF (78 aa)).

It belongs to the RimM family. Binds ribosomal protein uS19.

The protein resides in the cytoplasm. Functionally, an accessory protein needed during the final step in the assembly of 30S ribosomal subunit, possibly for assembly of the head region. Essential for efficient processing of 16S rRNA. May be needed both before and after RbfA during the maturation of 16S rRNA. It has affinity for free ribosomal 30S subunits but not for 70S ribosomes. The protein is Ribosome maturation factor RimM of Pseudomonas paraeruginosa (strain DSM 24068 / PA7) (Pseudomonas aeruginosa (strain PA7)).